The following is a 297-amino-acid chain: Probable endonuclease 4 (297 aa).

Zn(2+) contacts are provided by H69, H110, E145, D179, H182, H214, D227, H229, and E259.

Belongs to the AP endonuclease 2 family. Requires Zn(2+) as cofactor.

The enzyme catalyses Endonucleolytic cleavage to 5'-phosphooligonucleotide end-products.. Endonuclease IV plays a role in DNA repair. It cleaves phosphodiester bonds at apurinic or apyrimidinic (AP) sites, generating a 3'-hydroxyl group and a 5'-terminal sugar phosphate. The polypeptide is Probable endonuclease 4 (Listeria monocytogenes serovar 1/2a (strain ATCC BAA-679 / EGD-e)).